A 136-amino-acid polypeptide reads, in one-letter code: uncharacterized protein (136 aa).

Disordered regions lie at residues Gln-23–Asn-44 and Asp-56–Arg-95. The span at Ser-61–Glu-79 shows a compositional bias: low complexity. The span at Glu-80–Glu-91 shows a compositional bias: acidic residues.

This is an uncharacterized protein from Saccharomyces cerevisiae (strain ATCC 204508 / S288c) (Baker's yeast).